We begin with the raw amino-acid sequence, 347 residues long: Glycerol-3-phosphate dehydrogenase [NAD(P)+] (347 aa).

The NADPH site is built by Trp-20, Arg-39, and Lys-118. Lys-118, Gly-152, and Ser-154 together coordinate sn-glycerol 3-phosphate. Ala-156 is a binding site for NADPH. Residues Lys-207, Asp-260, Ser-270, Arg-271, and Asn-272 each coordinate sn-glycerol 3-phosphate. Lys-207 (proton acceptor) is an active-site residue. Arg-271 is a binding site for NADPH. NADPH is bound by residues Val-295 and Glu-297.

This sequence belongs to the NAD-dependent glycerol-3-phosphate dehydrogenase family.

It localises to the cytoplasm. The catalysed reaction is sn-glycerol 3-phosphate + NAD(+) = dihydroxyacetone phosphate + NADH + H(+). The enzyme catalyses sn-glycerol 3-phosphate + NADP(+) = dihydroxyacetone phosphate + NADPH + H(+). It participates in membrane lipid metabolism; glycerophospholipid metabolism. Catalyzes the reduction of the glycolytic intermediate dihydroxyacetone phosphate (DHAP) to sn-glycerol 3-phosphate (G3P), the key precursor for phospholipid synthesis. The sequence is that of Glycerol-3-phosphate dehydrogenase [NAD(P)+] from Cupriavidus pinatubonensis (strain JMP 134 / LMG 1197) (Cupriavidus necator (strain JMP 134)).